We begin with the raw amino-acid sequence, 175 residues long: Coagulogen (175 aa).

8 disulfide bridges follow: C8/C167, C10/C95, C60/C161, C65/C121, C75/C168, C88/C140, C127/C170, and C134/C172.

This sequence belongs to the coagulin family. Coagulogen is cleaved after Arg-18 and Arg-46 by a clotting enzyme contained in the hemocyte and activated by a bacterial endotoxin (lipopolysaccharide). This cleavage releases the peptide C and leaves 2 chains of coagulin, A and B, linked by two disulfide bonds. Coagulin molecules interlink to form a gel. Hemolymph.

The protein resides in the secreted. Its function is as follows. Coagulogen is a gel-forming protein of hemolymph; it hinders the spread of invaders by immobilizing them. The chain is Coagulogen from Carcinoscorpius rotundicauda (Mangrove horseshoe crab).